The following is a 167-amino-acid chain: NAD(P)H-quinone oxidoreductase subunit J (167 aa).

The protein belongs to the complex I 30 kDa subunit family. As to quaternary structure, NDH-1 can be composed of about 15 different subunits; different subcomplexes with different compositions have been identified which probably have different functions.

It localises to the cellular thylakoid membrane. It catalyses the reaction a plastoquinone + NADH + (n+1) H(+)(in) = a plastoquinol + NAD(+) + n H(+)(out). The enzyme catalyses a plastoquinone + NADPH + (n+1) H(+)(in) = a plastoquinol + NADP(+) + n H(+)(out). NDH-1 shuttles electrons from an unknown electron donor, via FMN and iron-sulfur (Fe-S) centers, to quinones in the respiratory and/or the photosynthetic chain. The immediate electron acceptor for the enzyme in this species is believed to be plastoquinone. Couples the redox reaction to proton translocation, and thus conserves the redox energy in a proton gradient. Cyanobacterial NDH-1 also plays a role in inorganic carbon-concentration. The protein is NAD(P)H-quinone oxidoreductase subunit J of Trichodesmium erythraeum (strain IMS101).